We begin with the raw amino-acid sequence, 505 residues long: Histidine--tRNA ligase (505 aa).

This sequence belongs to the class-II aminoacyl-tRNA synthetase family. As to quaternary structure, homodimer.

The protein resides in the cytoplasm. It carries out the reaction tRNA(His) + L-histidine + ATP = L-histidyl-tRNA(His) + AMP + diphosphate + H(+). This is Histidine--tRNA ligase from Jannaschia sp. (strain CCS1).